Here is a 420-residue protein sequence, read N- to C-terminus: Adenylosuccinate synthetase (420 aa).

Residues 12 to 18 (GDEGKGK) and 40 to 42 (GHT) contribute to the GTP site. Asp-13 functions as the Proton acceptor in the catalytic mechanism. Mg(2+) contacts are provided by Asp-13 and Gly-40. IMP contacts are provided by residues 13 to 16 (DEGK), 38 to 41 (NAGH), Thr-128, Arg-142, Gln-221, Thr-236, and Arg-299. His-41 acts as the Proton donor in catalysis. Residue 295-301 (ATTGRPR) participates in substrate binding. GTP contacts are provided by residues Arg-301, 327 to 329 (KAD), and 399 to 401 (SYG).

It belongs to the adenylosuccinate synthetase family. As to quaternary structure, homodimer. Mg(2+) is required as a cofactor.

It is found in the cytoplasm. The catalysed reaction is IMP + L-aspartate + GTP = N(6)-(1,2-dicarboxyethyl)-AMP + GDP + phosphate + 2 H(+). It functions in the pathway purine metabolism; AMP biosynthesis via de novo pathway; AMP from IMP: step 1/2. In terms of biological role, plays an important role in the de novo pathway of purine nucleotide biosynthesis. Catalyzes the first committed step in the biosynthesis of AMP from IMP. The sequence is that of Adenylosuccinate synthetase from Petrotoga mobilis (strain DSM 10674 / SJ95).